Reading from the N-terminus, the 255-residue chain is MVEDFAGDAMTLSIAQITDLHLLVDPQAALRGCVTTPRAAAVFGNLKQRSPDLLLLSGDLSEDGSPASYERLRDWVEELGCPAIAIAGNHDQPERLTEICGRSPFMGEPVYSIQGWRIIALDSYQPKRIDGRLRGDQLDWLDQRLGEDSSPTLLMLHHPPVLIGVTKMDAIGLKDGPEFLEVIAHHQQVRLVLSGHAHQAFIQGRGLTTFLGCPATAMQFDQPELPAGWRSLELEPDGSWRSQIHWVDTDSIHFA.

The Fe cation site is built by Asp-19, His-21, Asp-59, Asn-89, His-157, His-196, and His-198. AMP-binding positions include His-21, Asp-59, and 89-90 (NH). His-198 serves as a coordination point for AMP.

This sequence belongs to the cyclic nucleotide phosphodiesterase class-III family. Requires Fe(2+) as cofactor.

The polypeptide is Probable cyclic nucleotide phosphodiesterase syc0937_d (Synechococcus sp. (strain ATCC 27144 / PCC 6301 / SAUG 1402/1) (Anacystis nidulans)).